The sequence spans 192 residues: Ion-translocating oxidoreductase complex subunit A (192 aa).

6 helical membrane-spanning segments follow: residues 5–25 (LLLL…FLGL), 39–59 (IGMG…AYLV), 63–83 (ILTP…VIAV), 102–122 (LLGI…VALL), 134–154 (IIYG…FAAM), and 171–191 (SIAM…TGLV).

It belongs to the NqrDE/RnfAE family. As to quaternary structure, the complex is composed of six subunits: RnfA, RnfB, RnfC, RnfD, RnfE and RnfG.

The protein resides in the cell inner membrane. In terms of biological role, part of a membrane-bound complex that couples electron transfer with translocation of ions across the membrane. The protein is Ion-translocating oxidoreductase complex subunit A of Vibrio atlanticus (strain LGP32) (Vibrio splendidus (strain Mel32)).